Consider the following 495-residue polypeptide: Transcription termination/antitermination protein NusA (495 aa).

Positions G135 to S200 constitute an S1 motif domain. One can recognise a KH domain in the interval H302–I370. 2 consecutive repeat copies span residues N364 to L414 and G439 to C489. Residues N364 to C489 form a 2 X 51 AA approximate repeats region.

The protein belongs to the NusA family. In terms of assembly, monomer. Binds directly to the core enzyme of the DNA-dependent RNA polymerase and to nascent RNA.

Its subcellular location is the cytoplasm. Functionally, participates in both transcription termination and antitermination. In Buchnera aphidicola subsp. Schizaphis graminum (strain Sg), this protein is Transcription termination/antitermination protein NusA.